We begin with the raw amino-acid sequence, 77 residues long: Defensin-like protein 1 (77 aa).

The N-terminal stretch at 1–30 (MKLSVRFISAALLLFMVFIATGMGPVTVEA) is a signal peptide. Intrachain disulfides connect Cys-33–Cys-77, Cys-44–Cys-64, Cys-50–Cys-71, and Cys-54–Cys-73.

It belongs to the DEFL family. Expressed in the whole plant except roots.

It is found in the secreted. Its function is as follows. Confers broad-spectrum resistance to pathogens. The chain is Defensin-like protein 1 (PDF2.3) from Arabidopsis thaliana (Mouse-ear cress).